The chain runs to 140 residues: Sex-regulated protein janus-B (140 aa).

Residue Arg42 participates in substrate binding. The active-site Proton acceptor is His69. Substrate is bound at residue 110–112 (SRT).

This sequence belongs to the janus family. In terms of tissue distribution, germline cells of adult males.

JanA and janB regulate somatic sex differentiation. In Drosophila melanogaster (Fruit fly), this protein is Sex-regulated protein janus-B (janB).